Consider the following 361-residue polypeptide: MKTLIAAYSGVLRGTGSSILSALQDLFSVTWLNRAKVEKQLQVISVLQWVLSFLVLGVACSVILMYTFCTDCWLIAVLYFTWLVFDWNTPKKGGRRSQWVRNWAVWRYFRDYFPIQLVKTHNLLTSRNYIFGYHPHGIMGLGAFCNFSTEATEVSKKFPGIRPYLATLAGNFRMPVLREYLMSGGICPVNRDTIDYLLSKNGSGNAIIIVVGGAAESLSSMPGKNAVTLRNRKGFVKLALRHGADLVPTYSFGENEVYKQVIFEEGSWGRWVQKKFQKYIGFAPCIFHGRGLFSSDTWGLVPYSKPITTVVGEPITIPRLERPTQQDIDLYHAMYVQALVKLFDQHKTKFGLPETEVLEVN.

The Cytoplasmic portion of the chain corresponds to 1–42 (MKTLIAAYSGVLRGTGSSILSALQDLFSVTWLNRAKVEKQLQ). The chain crosses the membrane as a helical span at residues 43–61 (VISVLQWVLSFLVLGVACS). Over 62 to 65 (VILM) the chain is Lumenal. The helical transmembrane segment at 66 to 85 (YTFCTDCWLIAVLYFTWLVF) threads the bilayer. Over 86–361 (DWNTPKKGGR…LPETEVLEVN (276 aa)) the chain is Cytoplasmic.

Belongs to the diacylglycerol acyltransferase family. In terms of assembly, forms multimeric complexes consisting of several DGAT2 subunits. Interacts with SLC27A1 and this interaction is enhanced in the presence of ZFYVE1.

It localises to the endoplasmic reticulum membrane. Its subcellular location is the lipid droplet. The protein localises to the cytoplasm. The protein resides in the perinuclear region. It catalyses the reaction an acyl-CoA + a 1,2-diacyl-sn-glycerol = a triacyl-sn-glycerol + CoA. The catalysed reaction is all-trans-retinol + an acyl-CoA = an all-trans-retinyl ester + CoA. It carries out the reaction 2-(9Z-octadecenoyl)-glycerol + (9Z)-octadecenoyl-CoA = 1,2-di-(9Z-octadecenoyl)-sn-glycerol + CoA. The enzyme catalyses 1,2-di-(9Z-octadecenoyl)-sn-glycerol + (9Z)-octadecenoyl-CoA = 1,2,3-tri-(9Z-octadecenoyl)-glycerol + CoA. It catalyses the reaction all-trans-retinol + hexadecanoyl-CoA = all-trans-retinyl hexadecanoate + CoA. The catalysed reaction is 1-O-(9Z-octadecenyl)-glycerol + (9Z)-octadecenoyl-CoA = 1-O-(9Z-octadecyl)-3-(9Z-octadecenoyl)-glycerol + CoA. It carries out the reaction 1-(9Z-octadecenoyl)-glycerol + (9Z)-octadecenoyl-CoA = 1,2-di-(9Z-octadecenoyl)-glycerol + CoA. The enzyme catalyses 1,2-di-(9Z-octadecenoyl)-sn-glycerol + hexadecanoyl-CoA = 1,2-di-(9Z)-octadecenoyl-3-hexadecanoyl-sn-glycerol + CoA. It catalyses the reaction 1,3-di-(9Z-octadecenoyl)-glycerol + (9Z)-octadecenoyl-CoA = 1,2,3-tri-(9Z-octadecenoyl)-glycerol + CoA. The catalysed reaction is 2,3-di-(9Z)-octadecenoyl-sn-glycerol + (9Z)-octadecenoyl-CoA = 1,2,3-tri-(9Z-octadecenoyl)-glycerol + CoA. It carries out the reaction 2-(9Z-octadecenoyl)-glycerol + hexadecanoyl-CoA = 1-hexadecanoyl-2-(9Z-octadecenoyl)-sn-glycerol + CoA. It functions in the pathway glycerolipid metabolism; triacylglycerol biosynthesis. With respect to regulation, inhibited by niacin. Functionally, essential acyltransferase that catalyzes the terminal and only committed step in triacylglycerol synthesis by using diacylglycerol and fatty acyl CoA as substrates. Required for synthesis and storage of intracellular triglycerides. Probably plays a central role in cytosolic lipid accumulation. In liver, is primarily responsible for incorporating endogenously synthesized fatty acids into triglycerides. Also functions as an acyl-CoA retinol acyltransferase (ARAT). Also able to use 1-monoalkylglycerol (1-MAkG) as an acyl acceptor for the synthesis of monoalkyl-monoacylglycerol (MAMAG). The polypeptide is Diacylglycerol O-acyltransferase 2 (DGAT2) (Bos taurus (Bovine)).